The chain runs to 231 residues: Heptaprenylglyceryl phosphate synthase (231 aa).

Lys12 contacts sn-glycerol 1-phosphate. Mg(2+) is bound by residues Asp14 and Thr40. Residues 159–164 (YMEYSG), Gly189, and 209–210 (GN) each bind sn-glycerol 1-phosphate.

This sequence belongs to the GGGP/HepGP synthase family. Group I subfamily. Homodimer. Mg(2+) is required as a cofactor.

It carries out the reaction sn-glycerol 1-phosphate + all-trans-heptaprenyl diphosphate = 3-heptaprenyl-sn-glycero-1-phosphate + diphosphate. The protein operates within membrane lipid metabolism; glycerophospholipid metabolism. Its function is as follows. Prenyltransferase that catalyzes in vivo the transfer of the heptaprenyl moiety of heptaprenyl pyrophosphate (HepPP; 35 carbon atoms) to the C3 hydroxyl of sn-glycerol-1-phosphate (G1P), producing heptaprenylglyceryl phosphate (HepGP). This reaction is an ether-bond-formation step in the biosynthesis of archaea-type G1P-based membrane lipids found in Bacillales. The sequence is that of Heptaprenylglyceryl phosphate synthase from Anoxybacillus flavithermus (strain DSM 21510 / WK1).